Reading from the N-terminus, the 43-residue chain is Protein PsbN (43 aa).

Residues 7–27 traverse the membrane as a helical segment; it reads ITIFLSCFLVGVTGYALYTAF.

It belongs to the PsbN family.

The protein localises to the plastid. The protein resides in the chloroplast thylakoid membrane. Its function is as follows. May play a role in photosystem I and II biogenesis. This is Protein PsbN from Klebsormidium bilatum (Filamentous green alga).